Here is a 174-residue protein sequence, read N- to C-terminus: Large ribosomal subunit protein uL18 (174 aa).

The protein belongs to the universal ribosomal protein uL18 family. In terms of assembly, part of the 50S ribosomal subunit. Contacts the 5S and 23S rRNAs.

Functionally, this is one of the proteins that bind and probably mediate the attachment of the 5S RNA into the large ribosomal subunit, where it forms part of the central protuberance. This Methanosarcina barkeri (strain Fusaro / DSM 804) protein is Large ribosomal subunit protein uL18.